The sequence spans 255 residues: Tryptophan synthase alpha chain (255 aa).

Residues Glu51 and Asp62 each act as proton acceptor in the active site.

Belongs to the TrpA family. Tetramer of two alpha and two beta chains.

The catalysed reaction is (1S,2R)-1-C-(indol-3-yl)glycerol 3-phosphate + L-serine = D-glyceraldehyde 3-phosphate + L-tryptophan + H2O. Its pathway is amino-acid biosynthesis; L-tryptophan biosynthesis; L-tryptophan from chorismate: step 5/5. Its function is as follows. The alpha subunit is responsible for the aldol cleavage of indoleglycerol phosphate to indole and glyceraldehyde 3-phosphate. This Maridesulfovibrio salexigens (strain ATCC 14822 / DSM 2638 / NCIMB 8403 / VKM B-1763) (Desulfovibrio salexigens) protein is Tryptophan synthase alpha chain.